A 162-amino-acid chain; its full sequence is Phenazine biosynthesis protein PhzA2 (162 aa).

It belongs to the PhzA/PhzB family.

It functions in the pathway antibiotic biosynthesis; phenazine biosynthesis. Functionally, involved in the biosynthesis of the antibiotic phenazine, a nitrogen-containing heterocyclic molecule having important roles in virulence, competition and biological control. PhzA2 (operon phzA2B2C2E2F2G2) has a role in the biosynthesis of the phenazine during both planktonic growth and biofilm development, and in host infection during biofilm development. In Pseudomonas aeruginosa (strain ATCC 15692 / DSM 22644 / CIP 104116 / JCM 14847 / LMG 12228 / 1C / PRS 101 / PAO1), this protein is Phenazine biosynthesis protein PhzA2.